Reading from the N-terminus, the 259-residue chain is 5'-nucleotidase SurE (259 aa).

Residues Asp8, Asp9, Ser40, and Asn92 each coordinate a divalent metal cation.

This sequence belongs to the SurE nucleotidase family. Requires a divalent metal cation as cofactor.

It is found in the cytoplasm. The enzyme catalyses a ribonucleoside 5'-phosphate + H2O = a ribonucleoside + phosphate. Functionally, nucleotidase that shows phosphatase activity on nucleoside 5'-monophosphates. This Xanthomonas campestris pv. campestris (strain B100) protein is 5'-nucleotidase SurE.